Here is a 223-residue protein sequence, read N- to C-terminus: Ribose-5-phosphate isomerase A (223 aa).

Residues Thr-32–Thr-35, Asp-85–Asp-88, and Lys-98–Gly-101 contribute to the substrate site. The active-site Proton acceptor is Glu-107. Lys-125 serves as a coordination point for substrate.

This sequence belongs to the ribose 5-phosphate isomerase family. In terms of assembly, homodimer.

The catalysed reaction is aldehydo-D-ribose 5-phosphate = D-ribulose 5-phosphate. Its pathway is carbohydrate degradation; pentose phosphate pathway; D-ribose 5-phosphate from D-ribulose 5-phosphate (non-oxidative stage): step 1/1. Catalyzes the reversible conversion of ribose-5-phosphate to ribulose 5-phosphate. In Marinomonas sp. (strain MWYL1), this protein is Ribose-5-phosphate isomerase A.